The following is a 294-amino-acid chain: Pantothenate synthetase 3 (294 aa).

31–38 (MGALHEGH) serves as a coordination point for ATP. Residue His38 is the Proton donor of the active site. Gln62 is a (R)-pantoate binding site. Beta-alanine is bound at residue Gln62. 154 to 157 (GEKD) contributes to the ATP binding site. Residue Gln160 participates in (R)-pantoate binding. 191–194 (LSSR) provides a ligand contact to ATP.

The protein belongs to the pantothenate synthetase family. As to quaternary structure, homodimer.

The protein localises to the cytoplasm. The catalysed reaction is (R)-pantoate + beta-alanine + ATP = (R)-pantothenate + AMP + diphosphate + H(+). It participates in cofactor biosynthesis; (R)-pantothenate biosynthesis; (R)-pantothenate from (R)-pantoate and beta-alanine: step 1/1. Its function is as follows. Catalyzes the condensation of pantoate with beta-alanine in an ATP-dependent reaction via a pantoyl-adenylate intermediate. The polypeptide is Pantothenate synthetase 3 (Frankia alni (strain DSM 45986 / CECT 9034 / ACN14a)).